The primary structure comprises 250 residues: 2,3-bisphosphoglycerate-dependent phosphoglycerate mutase (250 aa).

Substrate-binding positions include 8–15 (RHGESTWN), 21–22 (TG), arginine 60, 87–90 (ERHY), lysine 98, and 114–115 (RR). The Tele-phosphohistidine intermediate role is filled by histidine 9. Residue glutamate 87 is the Proton donor/acceptor of the active site. Residues 116–135 (SYDTPPPPLAANDPRSERSD) are disordered. Residue 183–184 (GN) coordinates substrate.

This sequence belongs to the phosphoglycerate mutase family. BPG-dependent PGAM subfamily. Homodimer.

The enzyme catalyses (2R)-2-phosphoglycerate = (2R)-3-phosphoglycerate. Its pathway is carbohydrate degradation; glycolysis; pyruvate from D-glyceraldehyde 3-phosphate: step 3/5. In terms of biological role, catalyzes the interconversion of 2-phosphoglycerate and 3-phosphoglycerate. The polypeptide is 2,3-bisphosphoglycerate-dependent phosphoglycerate mutase (Polaromonas naphthalenivorans (strain CJ2)).